We begin with the raw amino-acid sequence, 398 residues long: Beta-1,4-galactosyltransferase 1 (398 aa).

The Cytoplasmic segment spans residues 1-24 (MRLREPLLSGSAAMPGASLQRACR). A helical; Signal-anchor for type II membrane protein transmembrane segment spans residues 25-44 (LLVAVCALHLGVTLVYYLAG). Topologically, residues 45 to 398 (RDLSRLPQLV…QITVDIGTPS (354 aa)) are lumenal. Polar residues predominate over residues 61-76 (QGGSNSAAAIGQSSGE). The disordered stretch occupies residues 61–117 (QGGSNSAAAIGQSSGELRTGGARPPPPLGASSQPRPGGDSSPVVDSGPGPASNLTSV). Asn113 is a glycosylation site (N-linked (GlcNAc...) asparagine). A disulfide bridge links Cys130 with Cys172. Residues 183-187 (PFRNR), 222-224 (FNR), 249-250 (VD), and Trp310 each bind UDP-alpha-D-galactose. A disulfide bond links Cys243 and Cys262. Asp250 lines the Mn(2+) pocket. 312-315 (GEDD) is an N-acetyl-D-glucosamine binding site. His343 is a Mn(2+) binding site. Residue 343 to 346 (HSRD) participates in UDP-alpha-D-galactose binding. N-acetyl-D-glucosamine is bound at residue Arg355.

The protein belongs to the glycosyltransferase 7 family. As to quaternary structure, homodimer; and heterodimer with alpha-lactalbumin to form lactose synthase. Interacts (via N-terminal cytoplasmic domain) with UBE2Q1 (via N-terminus); the interaction is direct. Requires Mn(2+) as cofactor. The soluble form derives from the membrane forms by proteolytic processing. In terms of tissue distribution, ubiquitously expressed, but at very low levels in fetal and adult brain.

It localises to the golgi apparatus. The protein resides in the golgi stack membrane. It is found in the cell membrane. Its subcellular location is the cell surface. The protein localises to the cell projection. It localises to the filopodium. The protein resides in the secreted. The enzyme catalyses D-glucose + UDP-alpha-D-galactose = lactose + UDP + H(+). It carries out the reaction an N-acetyl-beta-D-glucosaminyl derivative + UDP-alpha-D-galactose = a beta-D-galactosyl-(1-&gt;4)-N-acetyl-beta-D-glucosaminyl derivative + UDP + H(+). The catalysed reaction is N-acetyl-D-glucosamine + UDP-alpha-D-galactose = beta-D-galactosyl-(1-&gt;4)-N-acetyl-D-glucosamine + UDP + H(+). It catalyses the reaction a beta-D-GlcNAc-(1-&gt;3)-beta-D-Gal-(1-&gt;4)-beta-D-Glc-(1&lt;-&gt;1)-Cer(d18:1(4E)) + UDP-alpha-D-galactose = a neolactoside nLc4Cer(d18:1(4E)) + UDP + H(+). The enzyme catalyses a beta-D-glucosylceramide + UDP-alpha-D-galactose = a beta-D-galactosyl-(1-&gt;4)-beta-D-glucosyl-(1&lt;-&gt;1)-ceramide + UDP + H(+). It carries out the reaction a neolactoside IV(3)-beta-GlcNAc-nLc4Cer + UDP-alpha-D-galactose = a neolactoside nLc6Cer + UDP + H(+). Its pathway is protein modification; protein glycosylation. The Golgi complex form catalyzes the production of lactose in the lactating mammary gland and could also be responsible for the synthesis of complex-type N-linked oligosaccharides in many glycoproteins as well as the carbohydrate moieties of glycolipids. In terms of biological role, the cell surface form functions as a recognition molecule during a variety of cell to cell and cell to matrix interactions, as those occurring during development and egg fertilization, by binding to specific oligosaccharide ligands on opposing cells or in the extracellular matrix. The sequence is that of Beta-1,4-galactosyltransferase 1 from Homo sapiens (Human).